Reading from the N-terminus, the 226-residue chain is V-type proton ATPase subunit E (226 aa).

This sequence belongs to the V-ATPase E subunit family. As to quaternary structure, V-ATPase is a heteromultimeric enzyme composed of a peripheral catalytic V1 complex (components A to H) attached to an integral membrane V0 proton pore complex (components: a, c, c', c'', d, e, f and VOA1).

It is found in the vacuole membrane. In terms of biological role, subunit of the V1 complex of vacuolar(H+)-ATPase (V-ATPase), a multisubunit enzyme composed of a peripheral complex (V1) that hydrolyzes ATP and a membrane integral complex (V0) that translocates protons. V-ATPase is responsible for acidifying and maintaining the pH of intracellular compartments. This Candida albicans (Yeast) protein is V-type proton ATPase subunit E (VMA4).